The primary structure comprises 228 residues: Urease accessory protein UreF (228 aa).

This sequence belongs to the UreF family. UreD, UreF and UreG form a complex that acts as a GTP-hydrolysis-dependent molecular chaperone, activating the urease apoprotein by helping to assemble the nickel containing metallocenter of UreC. The UreE protein probably delivers the nickel.

It is found in the cytoplasm. In terms of biological role, required for maturation of urease via the functional incorporation of the urease nickel metallocenter. The chain is Urease accessory protein UreF from Yersinia pseudotuberculosis serotype IB (strain PB1/+).